Consider the following 530-residue polypeptide: NADH-quinone oxidoreductase subunit C/D (530 aa).

An NADH dehydrogenase I subunit C region spans residues 1 to 144 (MQEIQFIVPA…NPLCMANEET (144 aa)). The tract at residues 171-530 (EYVVNIGPQH…LDYVVPDIDR (360 aa)) is NADH dehydrogenase I subunit D.

The protein in the N-terminal section; belongs to the complex I 30 kDa subunit family. It in the C-terminal section; belongs to the complex I 49 kDa subunit family. In terms of assembly, NDH-1 is composed of 13 different subunits. Subunits NuoB, CD, E, F, and G constitute the peripheral sector of the complex.

It is found in the cell inner membrane. It catalyses the reaction a quinone + NADH + 5 H(+)(in) = a quinol + NAD(+) + 4 H(+)(out). In terms of biological role, NDH-1 shuttles electrons from NADH, via FMN and iron-sulfur (Fe-S) centers, to quinones in the respiratory chain. The immediate electron acceptor for the enzyme in this species is believed to be a menaquinone. Couples the redox reaction to proton translocation (for every two electrons transferred, four hydrogen ions are translocated across the cytoplasmic membrane), and thus conserves the redox energy in a proton gradient. This Bacteroides thetaiotaomicron (strain ATCC 29148 / DSM 2079 / JCM 5827 / CCUG 10774 / NCTC 10582 / VPI-5482 / E50) protein is NADH-quinone oxidoreductase subunit C/D.